The primary structure comprises 427 residues: MTRSETLFEQAKKTIPGGVNSPVRAFNGVGGTPRFIEKADGAYIYDADGKAYIDYVGSWGPMILGHNHPSIREAVLKAVHNGLSFGAPTELEVIMAEKVIEMVPSMDQVRMVSSGTEATMSAIRLARGYTKRDKILKFEGCYHGHADCLLVKAGSGALTLGQPSSPGIPEDFAKHTLTAVYNDLESVQSFFDQYPEDIACIIIEPVAGNMNCIPPVPGFLEGLRALCDKYGALFIIDEVMTGFRVSRSGAQGHYGVTPDLTTLGKVIGGGMPVGAFGGKKDVMQYLAPAGPVYQAGTLSGNPIAMTAGLAQLDALCADGLYEELAAKTKRIAEGFKAAADKHGIPMAINYVGGMFGFFFTDEQHITRFDQVTRCNMDHFRAFYHGMLDEGVYLAPSAYEAGFLSMAHGDKEIEETLAAADRVLARMK.

K265 carries the post-translational modification N6-(pyridoxal phosphate)lysine.

The protein belongs to the class-III pyridoxal-phosphate-dependent aminotransferase family. HemL subfamily. In terms of assembly, homodimer. Requires pyridoxal 5'-phosphate as cofactor.

Its subcellular location is the cytoplasm. The enzyme catalyses (S)-4-amino-5-oxopentanoate = 5-aminolevulinate. Its pathway is porphyrin-containing compound metabolism; protoporphyrin-IX biosynthesis; 5-aminolevulinate from L-glutamyl-tRNA(Glu): step 2/2. The chain is Glutamate-1-semialdehyde 2,1-aminomutase from Shewanella amazonensis (strain ATCC BAA-1098 / SB2B).